The primary structure comprises 54 residues: Ductus ejaculatorius peptide 99B (54 aa).

An N-terminal signal peptide occupies residues 1–21; that stretch reads MKTPLFLLLVVLASLLGLALS. Q22 bears the Pyrrolidone carboxylic acid mark. Residue N25 is glycosylated (N-linked (GlcNAc...) asparagine). The cysteines at positions 40 and 52 are disulfide-linked. Residues 53–54 constitute a propeptide that is removed on maturation; it reads RK.

The protein to paragonial peptide B. As to expression, ductus ejaculatorius.

Its subcellular location is the secreted. Functionally, induces post-mating responses; increased oviposition and reduced receptivity. The sequence is that of Ductus ejaculatorius peptide 99B (Dup99B) from Drosophila melanogaster (Fruit fly).